The primary structure comprises 337 residues: Cholinesterase 2 (337 aa).

The Acyl-ester intermediate role is filled by serine 99. A disulfide bond links cysteine 153 and cysteine 165. Glutamate 224 acts as the Charge relay system in catalysis. Residue asparagine 290 is glycosylated (N-linked (GlcNAc...) asparagine).

Belongs to the type-B carboxylesterase/lipase family.

It catalyses the reaction an acylcholine + H2O = a carboxylate + choline + H(+). This Branchiostoma lanceolatum (Common lancelet) protein is Cholinesterase 2 (CHE2).